The sequence spans 368 residues: DNA replication and repair protein RecF (368 aa).

G30–T37 lines the ATP pocket.

It belongs to the RecF family.

The protein localises to the cytoplasm. The RecF protein is involved in DNA metabolism; it is required for DNA replication and normal SOS inducibility. RecF binds preferentially to single-stranded, linear DNA. It also seems to bind ATP. The polypeptide is DNA replication and repair protein RecF (Xanthomonas axonopodis pv. citri (strain 306)).